We begin with the raw amino-acid sequence, 802 residues long: Aldehyde dehydrogenase family 16 member A1 (802 aa).

Residues 513–554 (SLPSGPETGPSPAPPYGLFVRGRFQSPGTQSSRPIKDSSGKV) form a disordered region.

This sequence belongs to the aldehyde dehydrogenase family. As to quaternary structure, interacts with SPG21.

The protein is Aldehyde dehydrogenase family 16 member A1 (Aldh16a1) of Rattus norvegicus (Rat).